Reading from the N-terminus, the 160-residue chain is Ribosomal RNA large subunit methyltransferase H (160 aa).

Residues glycine 108 and 127 to 132 each bind S-adenosyl-L-methionine; that span reads FGLMTW.

The protein belongs to the RNA methyltransferase RlmH family. As to quaternary structure, homodimer.

Its subcellular location is the cytoplasm. It catalyses the reaction pseudouridine(1915) in 23S rRNA + S-adenosyl-L-methionine = N(3)-methylpseudouridine(1915) in 23S rRNA + S-adenosyl-L-homocysteine + H(+). Specifically methylates the pseudouridine at position 1915 (m3Psi1915) in 23S rRNA. This is Ribosomal RNA large subunit methyltransferase H from Bartonella bacilliformis (strain ATCC 35685 / KC583 / Herrer 020/F12,63).